Here is a 333-residue protein sequence, read N- to C-terminus: Phenylalanine--tRNA ligase alpha subunit (333 aa).

Glutamate 254 contacts Mg(2+).

The protein belongs to the class-II aminoacyl-tRNA synthetase family. Phe-tRNA synthetase alpha subunit type 1 subfamily. In terms of assembly, tetramer of two alpha and two beta subunits. The cofactor is Mg(2+).

The protein localises to the cytoplasm. The catalysed reaction is tRNA(Phe) + L-phenylalanine + ATP = L-phenylalanyl-tRNA(Phe) + AMP + diphosphate + H(+). The polypeptide is Phenylalanine--tRNA ligase alpha subunit (Xylella fastidiosa (strain M23)).